Here is a 1054-residue protein sequence, read N- to C-terminus: CCAAT/enhancer-binding protein zeta (1054 aa).

The segment covering 1–20 (MAAVKEPLEFHAKRPWRPEE) has biased composition (basic and acidic residues). 2 disordered regions span residues 1–42 (MAAV…GFSL) and 102–160 (VEED…PKVK). Over residues 21-34 (AVEDPDEEDEDNTS) the composition is skewed to acidic residues. The span at 109-120 (EKENSSKKEVKI) shows a compositional bias: basic and acidic residues. Ser113 is modified (phosphoserine). Residues 124-138 (NNKNTAESQRTSVNK) are compositionally biased toward polar residues. Phosphoserine is present on Ser629. Lys695 carries the post-translational modification N6-acetyllysine. The residue at position 835 (Ser835) is a Phosphoserine. Disordered stretches follow at residues 873–902 (RTKGAKDNTLDEDSEGSDDELGNLDDDEVS) and 915–969 (DEDG…KKRN). 2 stretches are compositionally biased toward acidic residues: residues 882 to 902 (LDEDSEGSDDELGNLDDDEVS) and 915 to 933 (DEDGGTFMDVLDDESESVP). 3 positions are modified to phosphoserine: Ser959, Ser973, and Ser978. Positions 1031–1054 (IIKKKKHFKKKRIKTTQKTKKQRK) are disordered.

The protein belongs to the CBF/MAK21 family.

It is found in the nucleus. Its function is as follows. Stimulates transcription from the HSP70 promoter. This chain is CCAAT/enhancer-binding protein zeta (CEBPZ), found in Homo sapiens (Human).